A 293-amino-acid polypeptide reads, in one-letter code: GPN-loop GTPase 3 (293 aa).

13-18 (GAGKST) is a binding site for GTP. A Gly-Pro-Asn (GPN)-loop; involved in dimer interface motif is present at residues 70–72 (GPN). 176–179 (SKMD) lines the GTP pocket. The span at 272-281 (HEAQEPREPN) shows a compositional bias: basic and acidic residues. The interval 272–293 (HEAQEPREPNDEQDVDYEDADI) is disordered. A compositionally biased stretch (acidic residues) spans 282-293 (DEQDVDYEDADI).

This sequence belongs to the GPN-loop GTPase family. In terms of assembly, heterodimers with gpn1 or gpn2. Binds to RNA polymerase II (RNAPII).

Functionally, small GTPase required for proper nuclear import of RNA polymerase II and III (RNAPII and RNAPIII). May act at an RNAP assembly step prior to nuclear import. This Aspergillus fumigatus (strain ATCC MYA-4609 / CBS 101355 / FGSC A1100 / Af293) (Neosartorya fumigata) protein is GPN-loop GTPase 3.